Consider the following 245-residue polypeptide: tRNA pseudouridine synthase A (245 aa).

Asp52 functions as the Nucleophile in the catalytic mechanism. Position 111 (Tyr111) interacts with substrate.

The protein belongs to the tRNA pseudouridine synthase TruA family. Homodimer.

It carries out the reaction uridine(38/39/40) in tRNA = pseudouridine(38/39/40) in tRNA. In terms of biological role, formation of pseudouridine at positions 38, 39 and 40 in the anticodon stem and loop of transfer RNAs. The protein is tRNA pseudouridine synthase A of Rickettsia africae (strain ESF-5).